The primary structure comprises 206 residues: Large ribosomal subunit protein uL13 (206 aa).

It belongs to the universal ribosomal protein uL13 family.

This chain is Large ribosomal subunit protein uL13 (RPL13A), found in Picea mariana (Black spruce).